We begin with the raw amino-acid sequence, 472 residues long: MAAPMLRRLCRVPQSLVWLRGSRAVRPGARGMLVAPRARGLFKEFFPESGTKTELPELFDRRRAGSSPQTVYCGFDPTGDSLHVGHLLTLLGLFHFQRAGHNVIALVGGSTALLGDPSGRTKGREALSAECVRANAHALRRGLEALAANHARLFADGRPWGSFTVLDNAAWFQEQHLVDFLATVGGHFRMGTLLSRLSVQSRLKSPEGMSLAEFFYQVLQAYDFYYLFQHYGCRVQLGGSDQLGNIMSGYEFIHKLTGEDVFGITVPLITSTTGAKLGKSAGNAVWLNREKTSPFELYQFFVRQQDDSVERYLKLFTFLPLPEIDHIMQLHVKEPEKRVAQKRLAAEVTKLVHGQEGLDSAKRCTQALYHSSIEALEVMSDQELKELFKEASFSELVLDPGTSVIDTCRKANAIPDGPRGYRMITEGGVSINHRQVTNPESVLVIGQHILKNGLSLLKIGKRNFYIIKWLQL.

Tyr-72 contacts L-tyrosine. Asp-76 serves as a coordination point for ATP. The 'HIGH' region motif lies at 77–86 (PTGDSLHVGH). Residues Asp-116, Tyr-216, Gln-220, Asp-223, and Gln-242 each contribute to the L-tyrosine site. ATP contacts are provided by Ile-269 and Lys-279. The short motif at 276–280 (KLGKS) is the 'KMSKS' region element. 2 positions are modified to N6-acetyllysine: Lys-350 and Lys-362.

The protein belongs to the class-I aminoacyl-tRNA synthetase family. As to quaternary structure, homodimer.

Its subcellular location is the mitochondrion matrix. It catalyses the reaction tRNA(Tyr) + L-tyrosine + ATP = L-tyrosyl-tRNA(Tyr) + AMP + diphosphate + H(+). Catalyzes the attachment of tyrosine to tRNA(Tyr) in a two-step reaction: tyrosine is first activated by ATP to form Tyr-AMP and then transferred to the acceptor end of tRNA(Tyr). The chain is Tyrosine--tRNA ligase, mitochondrial (Yars2) from Mus musculus (Mouse).